The chain runs to 512 residues: Lysine--tRNA ligase (512 aa).

Positions 408 and 415 each coordinate Mg(2+).

This sequence belongs to the class-II aminoacyl-tRNA synthetase family. As to quaternary structure, homodimer. It depends on Mg(2+) as a cofactor.

Its subcellular location is the cytoplasm. It catalyses the reaction tRNA(Lys) + L-lysine + ATP = L-lysyl-tRNA(Lys) + AMP + diphosphate. This is Lysine--tRNA ligase from Prochlorococcus marinus (strain MIT 9515).